Consider the following 47-residue polypeptide: Boigatoxin-A (47 aa).

Pyrrolidone carboxylic acid is present on glutamine 1. 2 cysteine pairs are disulfide-bonded: cysteine 10/cysteine 34 and cysteine 13/cysteine 21.

In terms of assembly, monomer. In terms of tissue distribution, expressed by the venom gland.

It is found in the secreted. In terms of biological role, this toxin may inhibit nicotinic acetylcholine receptor (nAChR). It has poorly reversible postsynaptic blocking activity in a chick muscle preparation and readily reversible inhibitory activity at a presynaptic site in the rat vas deferens prostatic segment most likely to prevent the release of neurotransmitters. The chain is Boigatoxin-A from Boiga dendrophila (Mangrove snake).